We begin with the raw amino-acid sequence, 273 residues long: 2-dehydro-3-deoxyphosphooctonate aldolase (273 aa).

This sequence belongs to the KdsA family.

It is found in the cytoplasm. The catalysed reaction is D-arabinose 5-phosphate + phosphoenolpyruvate + H2O = 3-deoxy-alpha-D-manno-2-octulosonate-8-phosphate + phosphate. It functions in the pathway carbohydrate biosynthesis; 3-deoxy-D-manno-octulosonate biosynthesis; 3-deoxy-D-manno-octulosonate from D-ribulose 5-phosphate: step 2/3. The protein operates within bacterial outer membrane biogenesis; lipopolysaccharide biosynthesis. This is 2-dehydro-3-deoxyphosphooctonate aldolase from Desulfatibacillum aliphaticivorans.